The primary structure comprises 217 residues: Proteasome subunit beta type-9 (217 aa).

Positions 1–18 (MLDESLEPGWLSEEVKTG) are cleaved as a propeptide — removed in mature form. The active-site Nucleophile is the Thr-19.

The protein belongs to the peptidase T1B family. The 26S proteasome consists of a 20S proteasome core and two 19S regulatory subunits. The 20S proteasome core is composed of 28 subunits that are arranged in four stacked rings, resulting in a barrel-shaped structure. The two end rings are each formed by seven alpha subunits, and the two central rings are each formed by seven beta subunits. The catalytic chamber with the active sites is on the inside of the barrel. Component of the immunoproteasome, where it displaces the equivalent housekeeping subunit PSMB6. In terms of processing, autocleaved. The resulting N-terminal Thr residue of the mature subunit is responsible for the nucleophile proteolytic activity.

The protein localises to the cytoplasm. It localises to the nucleus. The catalysed reaction is Cleavage of peptide bonds with very broad specificity.. The proteasome is a multicatalytic proteinase complex which is characterized by its ability to cleave peptides with Arg, Phe, Tyr, Leu, and Glu adjacent to the leaving group at neutral or slightly basic pH. The proteasome has an ATP-dependent proteolytic activity. This subunit is involved in antigen processing to generate class I binding peptides. The sequence is that of Proteasome subunit beta type-9 (psmb9) from Oncorhynchus mykiss (Rainbow trout).